A 196-amino-acid chain; its full sequence is Rho-related protein racA (196 aa).

GTP-binding residues include A13, G15, K16, T17, C18, Y32, T35, G60, K116, D118, and A159. Mg(2+) is bound at residue T17. 2 consecutive short sequence motifs (switch) follow at residues 26–37 (NAFPNEYIPTVF) and 57–75 (DTAG…YPQT). T35 is a Mg(2+) binding site. The residue at position 193 (C193) is a Cysteine methyl ester. The S-geranylgeranyl cysteine moiety is linked to residue C193. Positions 194–196 (LLF) are cleaved as a propeptide — removed in mature form.

It belongs to the small GTPase superfamily. Rho family. Interacts (GTP-bound form) with PAK2 (via CRIB domain). Requires Mg(2+) as cofactor.

Its subcellular location is the cell membrane. It localises to the cytoplasm. The protein resides in the cytoskeleton. The enzyme catalyses GTP + H2O = GDP + phosphate + H(+). With respect to regulation, regulated by guanine nucleotide exchange factors (GEFs) which promote the exchange of bound GDP for free GTP, GTPase activating proteins (GAPs) which increase the GTP hydrolysis activity, and GDP dissociation inhibitors which inhibit the dissociation of the nucleotide from the GTPase. Its function is as follows. Small GTPase which cycles between active GTP-bound and inactive GDP-bound states. Involved in cytoskeleton remodeling. Plays a role in phagocytosis of bacteria and host erythrocytes. Involved in capping of surface receptors. May be involved in cytokinesis. The polypeptide is Rho-related protein racA (Entamoeba histolytica (strain ATCC 30459 / HM-1:IMSS / ABRM)).